The primary structure comprises 416 residues: Glutamate dehydrogenase (416 aa).

Lys-105 is a catalytic residue.

Belongs to the Glu/Leu/Phe/Val dehydrogenases family. Homohexamer.

It carries out the reaction L-glutamate + NAD(+) + H2O = 2-oxoglutarate + NH4(+) + NADH + H(+). It catalyses the reaction L-glutamate + NADP(+) + H2O = 2-oxoglutarate + NH4(+) + NADPH + H(+). This is Glutamate dehydrogenase (gdhA) from Thermotoga maritima (strain ATCC 43589 / DSM 3109 / JCM 10099 / NBRC 100826 / MSB8).